The chain runs to 347 residues: 3-isopropylmalate dehydrogenase (347 aa).

4 residues coordinate substrate: Arg-87, Arg-97, Arg-121, and Asp-212. Residues Asp-212, Asp-236, and Asp-240 each contribute to the Mg(2+) site. NAD(+) is bound at residue 272–284 (GSAPDIAGQGTAD).

It belongs to the isocitrate and isopropylmalate dehydrogenases family. LeuB type 2 subfamily. Homodimer. Requires Mg(2+) as cofactor. Mn(2+) serves as cofactor.

It is found in the cytoplasm. The enzyme catalyses (2R,3S)-3-isopropylmalate + NAD(+) = 4-methyl-2-oxopentanoate + CO2 + NADH. It participates in amino-acid biosynthesis; L-leucine biosynthesis; L-leucine from 3-methyl-2-oxobutanoate: step 3/4. Functionally, catalyzes the oxidation of 3-carboxy-2-hydroxy-4-methylpentanoate (3-isopropylmalate) to 3-carboxy-4-methyl-2-oxopentanoate. The product decarboxylates to 4-methyl-2 oxopentanoate. The sequence is that of 3-isopropylmalate dehydrogenase from Saccharopolyspora erythraea (strain ATCC 11635 / DSM 40517 / JCM 4748 / NBRC 13426 / NCIMB 8594 / NRRL 2338).